Here is a 1419-residue protein sequence, read N- to C-terminus: L-2-aminoadipate reductase (1419 aa).

In terms of domain architecture, Carrier spans 880-956 (ETLTATERDI…GLAKEIERMK (77 aa)). Ser-916 bears the O-(pantetheine 4'-phosphoryl)serine mark.

The protein belongs to the ATP-dependent AMP-binding enzyme family. Pantetheine 4'-phosphate is required as a cofactor.

The protein localises to the cytoplasm. The catalysed reaction is (S)-2-amino-6-oxohexanoate + NADP(+) + H2O = L-2-aminoadipate + NADPH + 2 H(+). It carries out the reaction (S)-2-amino-6-oxohexanoate + NAD(+) + H2O = L-2-aminoadipate + NADH + 2 H(+). It catalyses the reaction (S)-2-amino-6-oxohexanoate + AMP + diphosphate + NADP(+) = L-2-aminoadipate + ATP + NADPH + H(+). It participates in amino-acid biosynthesis; L-lysine biosynthesis via AAA pathway; L-lysine from L-alpha-aminoadipate (fungal route): step 1/3. Its function is as follows. Catalyzes the activation of alpha-aminoadipate by ATP-dependent adenylation and the reduction of activated alpha-aminoadipate by NADPH. The activated alpha-aminoadipate is bound to the phosphopantheinyl group of the enzyme itself before it is reduced to (S)-2-amino-6-oxohexanoate. This Schizosaccharomyces pombe (strain 972 / ATCC 24843) (Fission yeast) protein is L-2-aminoadipate reductase (lys1).